The sequence spans 200 residues: Snake venom metalloproteinase BmooMP-I (200 aa).

A Peptidase M12B domain is found at 5-200 (RYIELAVVAD…HNPQCILNEP (196 aa)). Ca(2+) contacts are provided by glutamate 8 and aspartate 92. 3 cysteine pairs are disulfide-bonded: cysteine 116-cysteine 195, cysteine 155-cysteine 179, and cysteine 157-cysteine 162. Residue histidine 141 participates in Zn(2+) binding. Residue glutamate 142 is part of the active site. Zn(2+) is bound by residues histidine 145 and histidine 151. Cysteine 195 and asparagine 198 together coordinate Ca(2+).

The protein belongs to the venom metalloproteinase (M12B) family. P-I subfamily. Monomer. Zn(2+) serves as cofactor. As to expression, expressed by the venom gland.

It is found in the secreted. Functionally, zinc metalloprotease that displays fibrinogenolytic, gelatinase and weak hemorrhagic activities. Degrades the three chain of fibrinogen Aalpha-chain (FGA), Bbeta-chain (FGB), and gamma (FGG). The protein is Snake venom metalloproteinase BmooMP-I of Bothrops moojeni (Lance-headed viper).